The primary structure comprises 264 residues: 3-methyl-2-oxobutanoate hydroxymethyltransferase (264 aa).

Mg(2+)-binding residues include aspartate 43 and aspartate 82. Residues aspartate 43–serine 44, aspartate 82, and lysine 111 contribute to the 3-methyl-2-oxobutanoate site. Glutamate 113 provides a ligand contact to Mg(2+). Glutamate 180 serves as the catalytic Proton acceptor.

Belongs to the PanB family. As to quaternary structure, homodecamer; pentamer of dimers. It depends on Mg(2+) as a cofactor.

It is found in the cytoplasm. The enzyme catalyses 3-methyl-2-oxobutanoate + (6R)-5,10-methylene-5,6,7,8-tetrahydrofolate + H2O = 2-dehydropantoate + (6S)-5,6,7,8-tetrahydrofolate. The protein operates within cofactor biosynthesis; (R)-pantothenate biosynthesis; (R)-pantoate from 3-methyl-2-oxobutanoate: step 1/2. Functionally, catalyzes the reversible reaction in which hydroxymethyl group from 5,10-methylenetetrahydrofolate is transferred onto alpha-ketoisovalerate to form ketopantoate. In Campylobacter fetus subsp. fetus (strain 82-40), this protein is 3-methyl-2-oxobutanoate hydroxymethyltransferase.